The sequence spans 501 residues: Probable cytochrome P450 508A4 (501 aa).

Residues 1 to 21 (MIMLIKVFVLLLVVYILHNSY) traverse the membrane as a helical segment. Residue Cys-445 participates in heme binding.

It belongs to the cytochrome P450 family. Requires heme as cofactor.

Its subcellular location is the membrane. This chain is Probable cytochrome P450 508A4 (cyp508A4), found in Dictyostelium discoideum (Social amoeba).